Reading from the N-terminus, the 88-residue chain is Large ribosomal subunit protein bL27 (88 aa).

The tract at residues 1–24 is disordered; the sequence is MAHKKAGGSSRNGRDSAGQRRGVK.

It belongs to the bacterial ribosomal protein bL27 family.

The protein is Large ribosomal subunit protein bL27 of Syntrophobacter fumaroxidans (strain DSM 10017 / MPOB).